We begin with the raw amino-acid sequence, 132 residues long: uncharacterized protein (132 aa).

This is an uncharacterized protein from Botryotinia fuckeliana (Noble rot fungus).